Reading from the N-terminus, the 148-residue chain is Lysozyme C-1 (148 aa).

A signal peptide spans 1 to 18 (MKALLVLGFLLLSASVQA). Residues 19 to 148 (KIYERCQFAR…LSGYIRNCGV (130 aa)) enclose the C-type lysozyme domain. 4 disulfides stabilise this stretch: C24–C146, C48–C134, C83–C99, and C95–C113. Residues E53 and D71 contribute to the active site.

Belongs to the glycosyl hydrolase 22 family. Monomer. Expressed in lung, small intestine and spleen.

It is found in the secreted. The catalysed reaction is Hydrolysis of (1-&gt;4)-beta-linkages between N-acetylmuramic acid and N-acetyl-D-glucosamine residues in a peptidoglycan and between N-acetyl-D-glucosamine residues in chitodextrins.. In terms of biological role, lysozymes have primarily a bacteriolytic function; those in tissues and body fluids are associated with the monocyte-macrophage system and enhance the activity of immunoagents. In the intestine they may also have a digestive function. The polypeptide is Lysozyme C-1 (Lyz1) (Rattus norvegicus (Rat)).